Reading from the N-terminus, the 1087-residue chain is DNA polymerase II large subunit (1087 aa).

Belongs to the archaeal DNA polymerase II family. As to quaternary structure, heterodimer of a large subunit and a small subunit.

It carries out the reaction DNA(n) + a 2'-deoxyribonucleoside 5'-triphosphate = DNA(n+1) + diphosphate. The enzyme catalyses Exonucleolytic cleavage in the 3'- to 5'-direction to yield nucleoside 5'-phosphates.. Possesses two activities: a DNA synthesis (polymerase) and an exonucleolytic activity that degrades single-stranded DNA in the 3'- to 5'-direction. Has a template-primer preference which is characteristic of a replicative DNA polymerase. In Thermoplasma acidophilum (strain ATCC 25905 / DSM 1728 / JCM 9062 / NBRC 15155 / AMRC-C165), this protein is DNA polymerase II large subunit (polC).